A 319-amino-acid chain; its full sequence is Methionyl-tRNA formyltransferase (319 aa).

115 to 118 (SLLP) lines the (6S)-5,6,7,8-tetrahydrofolate pocket.

The protein belongs to the Fmt family.

It carries out the reaction L-methionyl-tRNA(fMet) + (6R)-10-formyltetrahydrofolate = N-formyl-L-methionyl-tRNA(fMet) + (6S)-5,6,7,8-tetrahydrofolate + H(+). Attaches a formyl group to the free amino group of methionyl-tRNA(fMet). The formyl group appears to play a dual role in the initiator identity of N-formylmethionyl-tRNA by promoting its recognition by IF2 and preventing the misappropriation of this tRNA by the elongation apparatus. This Lactococcus lactis subsp. lactis (strain IL1403) (Streptococcus lactis) protein is Methionyl-tRNA formyltransferase.